The sequence spans 444 residues: Alanyl-tRNA editing protein Aarsd1 (444 aa).

Zn(2+) contacts are provided by His-109 and His-113. A Phosphoserine modification is found at Ser-174. Residues Cys-209 and His-213 each coordinate Zn(2+).

It belongs to the class-II aminoacyl-tRNA synthetase family. Alax-L subfamily. The cofactor is Zn(2+).

The protein localises to the cytoplasm. In terms of biological role, functions in trans to edit the amino acid moiety from incorrectly charged tRNA(Ala). This Bos taurus (Bovine) protein is Alanyl-tRNA editing protein Aarsd1 (AARSD1).